A 446-amino-acid chain; its full sequence is Probable ribosomal RNA small subunit methyltransferase B (446 aa).

S-adenosyl-L-methionine is bound by residues cysteine 260 to lysine 266, aspartate 284, aspartate 311, and aspartate 330. The active-site Nucleophile is the cysteine 383.

This sequence belongs to the class I-like SAM-binding methyltransferase superfamily. RsmB/NOP family.

The protein resides in the cytoplasm. It catalyses the reaction cytidine(967) in 16S rRNA + S-adenosyl-L-methionine = 5-methylcytidine(967) in 16S rRNA + S-adenosyl-L-homocysteine + H(+). Its function is as follows. Specifically methylates the cytosine at position 967 (m5C967) of 16S rRNA. The polypeptide is Probable ribosomal RNA small subunit methyltransferase B (Synechocystis sp. (strain ATCC 27184 / PCC 6803 / Kazusa)).